Here is a 258-residue protein sequence, read N- to C-terminus: Mitochondrial distribution and morphology protein 12 (258 aa).

One can recognise an SMP-LTD domain in the interval 1–233; it reads MSFDIHWSNL…WPSWIELDFN (233 aa). Positions 238–258 are disordered; sequence EDLQQSKDTPTTANTGTTTTN. Over residues 246–258 the composition is skewed to low complexity; it reads TPTTANTGTTTTN.

The protein belongs to the MDM12 family. Component of the ER-mitochondria encounter structure (ERMES) or MDM complex, composed of MMM1, MDM10, MDM12 and MDM34. An MMM1 homodimer associates with one molecule of MDM12 on each side in a pairwise head-to-tail manner, and the SMP-LTD domains of MMM1 and MDM12 generate a continuous hydrophobic tunnel for phospholipid trafficking.

Its subcellular location is the mitochondrion outer membrane. The protein localises to the endoplasmic reticulum membrane. Functionally, component of the ERMES/MDM complex, which serves as a molecular tether to connect the endoplasmic reticulum (ER) and mitochondria. Components of this complex are involved in the control of mitochondrial shape and protein biogenesis, and function in nonvesicular lipid trafficking between the ER and mitochondria. MDM12 is required for the interaction of the ER-resident membrane protein MMM1 and the outer mitochondrial membrane-resident beta-barrel protein MDM10. The MDM12-MMM1 subcomplex functions in the major beta-barrel assembly pathway that is responsible for biogenesis of all mitochondrial outer membrane beta-barrel proteins, and acts in a late step after the SAM complex. The MDM10-MDM12-MMM1 subcomplex further acts in the TOM40-specific pathway after the action of the MDM12-MMM1 complex. Essential for establishing and maintaining the structure of mitochondria and maintenance of mtDNA nucleoids. The chain is Mitochondrial distribution and morphology protein 12 from Zygosaccharomyces rouxii (strain ATCC 2623 / CBS 732 / NBRC 1130 / NCYC 568 / NRRL Y-229).